Consider the following 694-residue polypeptide: DNA-binding protein RFX2 (694 aa).

The segment at residues 174–249 (HLQWLLDNYE…YHYYGIRLKP (76 aa)) is a DNA-binding region (RFX-type winged-helix). Disordered stretches follow at residues 267–310 (QQPI…QHHQ) and 658–694 (KDDVSELGSDTEGDPHISGQPPVKRERVELNHSMQEM). Residues 289–299 (PANSSQHASPE) are compositionally biased toward polar residues. Residues 300–310 (QSVAAQSQHHQ) show a composition bias toward low complexity.

It belongs to the RFX family. Homodimer. Heterodimer; heterodimerizes with other rfx proteins. Preferentially expressed in ciliated tissues, such as neural tube, gastrocoel roof plate, epidermal multiciliated cells, otic vesicles and kidneys.

It localises to the nucleus. The protein localises to the cytoplasm. Transcription factor that acts as a key regulator of ciliogenesis. Specifically regulates expression of genes required for cilium assembly and function. Recognizes and binds the X-box, a regulatory motif with DNA sequence 5'-GTNRCC(0-3N)RGYAAC-3' present on promoters. Required for neural tube closure and neural ciliogenesis. In Xenopus laevis (African clawed frog), this protein is DNA-binding protein RFX2 (rfx2).